We begin with the raw amino-acid sequence, 468 residues long: Proline--tRNA ligase (468 aa).

This sequence belongs to the class-II aminoacyl-tRNA synthetase family. ProS type 3 subfamily. As to quaternary structure, homodimer.

The protein resides in the cytoplasm. The catalysed reaction is tRNA(Pro) + L-proline + ATP = L-prolyl-tRNA(Pro) + AMP + diphosphate. Its function is as follows. Catalyzes the attachment of proline to tRNA(Pro) in a two-step reaction: proline is first activated by ATP to form Pro-AMP and then transferred to the acceptor end of tRNA(Pro). The sequence is that of Proline--tRNA ligase from Frankia alni (strain DSM 45986 / CECT 9034 / ACN14a).